Reading from the N-terminus, the 206-residue chain is Large ribosomal subunit protein uL4 (206 aa).

It belongs to the universal ribosomal protein uL4 family. In terms of assembly, part of the 50S ribosomal subunit.

Its function is as follows. One of the primary rRNA binding proteins, this protein initially binds near the 5'-end of the 23S rRNA. It is important during the early stages of 50S assembly. It makes multiple contacts with different domains of the 23S rRNA in the assembled 50S subunit and ribosome. In terms of biological role, forms part of the polypeptide exit tunnel. In Afipia carboxidovorans (strain ATCC 49405 / DSM 1227 / KCTC 32145 / OM5) (Oligotropha carboxidovorans), this protein is Large ribosomal subunit protein uL4.